The primary structure comprises 138 residues: Probable glycine cleavage system H protein 1 (138 aa).

In terms of domain architecture, Lipoyl-binding spans 30 to 112; that stretch reads IATVGITDYA…YGRGWIFKLK (83 aa). K71 bears the N6-lipoyllysine mark.

This sequence belongs to the GcvH family. The glycine cleavage system is composed of four proteins: P, T, L and H. Requires (R)-lipoate as cofactor.

The glycine cleavage system catalyzes the degradation of glycine. The H protein shuttles the methylamine group of glycine from the P protein to the T protein. The chain is Probable glycine cleavage system H protein 1 from Sulfolobus acidocaldarius (strain ATCC 33909 / DSM 639 / JCM 8929 / NBRC 15157 / NCIMB 11770).